A 969-amino-acid chain; its full sequence is Proprotein convertase subtilisin/kexin type 6 (969 aa).

Residues 1–16 (MPPRAPPAPGPRPPPR) show a composition bias toward pro residues. The segment at 1–39 (MPPRAPPAPGPRPPPRAAAATDTAAGAGGAGGAGGAGGP) is disordered. The N-terminal stretch at 1–63 (MPPRAPPAPG…LLALPAACSA (63 aa)) is a signal peptide. Gly residues predominate over residues 26-39 (GAGGAGGAGGAGGP). The propeptide occupies 64–149 (PPPRPVYTNH…QQEVKRRVKR (86 aa)). A Peptidase S8 domain is found at 168–487 (MWYLHCGDKN…FGLVDAEALV (320 aa)). Residues D205 and H246 each act as charge relay system in the active site. N259 is a glycosylation site (N-linked (GlcNAc...) asparagine). Residue S420 is the Charge relay system of the active site. The P/Homo B domain occupies 495–635 (AVPSQHMCVA…SLILYGTAEH (141 aa)). A Cell attachment site motif is present at residues 553–555 (RGD). The disordered stretch occupies residues 658–683 (EPPKAALSPSQVEVPEDEEDYTAQST). 5 FU repeats span residues 692 to 739 (TSVC…GYFG), 743 to 790 (ARRC…GFYA), 794 to 838 (QKNC…GTYF), 842 to 887 (LIRC…GFYP), and 895 to 943 (HKVC…ETFC). Residues 695 to 930 (CHPECGDKGC…GFTQLGTSCI (236 aa)) are CRM (Cys-rich motif). Residues N914 and N932 are each glycosylated (N-linked (GlcNAc...) asparagine). One can recognise a PLAC domain in the interval 931 to 969 (TNHTCSNADETFCEMVKSNRLCERKLFIQFCCRTCLLAG).

It belongs to the peptidase S8 family. As to quaternary structure, the PACE4A-I precursor protein seems to exist in the reticulum endoplasmic as both a monomer and a dimer-sized complex whereas mature PACE4A-I exists only as a monomer, suggesting that propeptide cleavage affects its tertiary or quaternary structure. Interacts (immature form including the propeptide) with RCN3; probably involved in the maturation and the secretion of PCSK6. The cofactor is Ca(2+). Each PACE4 isoform exhibits a unique restricted distribution. Isoform PACE4A-I is expressed in heart, brain, placenta, lung, skeletal muscle, kidney, pancreas, but at comparatively higher levels in the liver. Isoform PACE4A-II is at least expressed in placenta. Isoform PACE4B was only found in the embryonic kidney cell line from which it was isolated. Isoform PACE4C and isoform PACE4D are expressed in placenta. Isoform PACE4E-I is expressed in cerebellum, placenta and pituitary. Isoform PACE4E-II is at least present in cerebellum.

It localises to the secreted. The protein localises to the endoplasmic reticulum. Its subcellular location is the endomembrane system. Functionally, serine endoprotease that processes various proproteins by cleavage at paired basic amino acids, recognizing the RXXX[KR]R consensus motif. Likely functions in the constitutive secretory pathway, with unique restricted distribution in both neuroendocrine and non-neuroendocrine tissues. The chain is Proprotein convertase subtilisin/kexin type 6 (PCSK6) from Homo sapiens (Human).